The following is a 154-amino-acid chain: Actin-related protein 2/3 complex subunit 5 (154 aa).

At Thr-142 the chain carries Phosphothreonine.

This sequence belongs to the ARPC5 family. Component of the Arp2/3 complex composed of ARP2, ARP3, ARC40/p41-ARC, ARC35/p34-ARC, ARC18/p21-ARC, ARC19/p20-ARC and ARC16/p16-ARC.

The protein resides in the cytoplasm. The protein localises to the cytoskeleton. It is found in the actin patch. Its function is as follows. Functions as a component of the Arp2/3 complex which is involved in regulation of actin polymerization and together with an activating nucleation-promoting factor (NPF) mediates the formation of branched actin networks. The polypeptide is Actin-related protein 2/3 complex subunit 5 (ARC15) (Saccharomyces cerevisiae (strain ATCC 204508 / S288c) (Baker's yeast)).